The chain runs to 456 residues: Ribosomal protein uS12 methylthiotransferase RimO (456 aa).

The MTTase N-terminal domain maps to 11–126 (PKVGFVSLGC…VMQAVHTHLP (116 aa)). [4Fe-4S] cluster contacts are provided by Cys20, Cys56, Cys85, Cys157, Cys161, and Cys164. Residues 143-384 (LTPKHYAYLK…MEVAEEVSAR (242 aa)) enclose the Radical SAM core domain. A TRAM domain is found at 387-456 (QRKVGQTLRV…DGHDLWGEVA (70 aa)).

The protein belongs to the methylthiotransferase family. RimO subfamily. [4Fe-4S] cluster is required as a cofactor.

Its subcellular location is the cytoplasm. The catalysed reaction is L-aspartate(89)-[ribosomal protein uS12]-hydrogen + (sulfur carrier)-SH + AH2 + 2 S-adenosyl-L-methionine = 3-methylsulfanyl-L-aspartate(89)-[ribosomal protein uS12]-hydrogen + (sulfur carrier)-H + 5'-deoxyadenosine + L-methionine + A + S-adenosyl-L-homocysteine + 2 H(+). Its function is as follows. Catalyzes the methylthiolation of an aspartic acid residue of ribosomal protein uS12. In Cupriavidus metallidurans (strain ATCC 43123 / DSM 2839 / NBRC 102507 / CH34) (Ralstonia metallidurans), this protein is Ribosomal protein uS12 methylthiotransferase RimO.